The sequence spans 385 residues: Multidrug resistance protein MdtE (385 aa).

Residues 1-20 (MNRRRKLLIPLLFCGAMLTA) form the signal peptide. Cys-21 is lipidated: N-palmitoyl cysteine. Cys-21 is lipidated: S-diacylglycerol cysteine.

The protein belongs to the membrane fusion protein (MFP) (TC 8.A.1) family. In terms of assembly, homotrimer. Part of the tripartite efflux system MdtEF-TolC, which is composed of an inner membrane transporter, MdtF, a membrane fusion protein, MdtE, and an outer membrane component, TolC. The complex forms a large protein conduit and can translocate molecules across both the inner and outer membranes.

It localises to the cell inner membrane. Part of the tripartite efflux system MdtEF-TolC, which confers resistance to various compounds. This Escherichia coli O157:H7 protein is Multidrug resistance protein MdtE (mdtE).